Reading from the N-terminus, the 220-residue chain is MGQKVSPVGLRIGVIRDWESKWYADKDFATLLHEDLKIRKYVKGRLKDAAVSTIEIERAANRVNVTIHTAKPGMVIGKGGSEVETLRKTLTDLTGKRVHININEIKRPDLDATLVAENIARQLENRISFRRAQKQSITRTLRSGAKGIKTLVSGRLGGADIARSEGYSEGTVPLHTLRADIDYGTAEAHTTYGRIGVKVWIYRGEVLPARKNVATEEGGK.

One can recognise a KH type-2 domain in the interval 38–106; it reads IRKYVKGRLK…RVHININEIK (69 aa).

This sequence belongs to the universal ribosomal protein uS3 family. In terms of assembly, part of the 30S ribosomal subunit. Forms a tight complex with proteins S10 and S14.

Functionally, binds the lower part of the 30S subunit head. Binds mRNA in the 70S ribosome, positioning it for translation. The sequence is that of Small ribosomal subunit protein uS3 from Brevibacillus brevis (strain 47 / JCM 6285 / NBRC 100599).